Here is a 264-residue protein sequence, read N- to C-terminus: Acid phosphatase (264 aa).

The first 28 residues, 1 to 28, serve as a signal peptide directing secretion; the sequence is MIKVPRFICMIALTSGILASGLSQSVSA.

Belongs to the class A bacterial acid phosphatase family. Requires Mg(2+) as cofactor. Zn(2+) is required as a cofactor.

The protein resides in the periplasm. The enzyme catalyses a phosphate monoester + H2O = an alcohol + phosphate. The sequence is that of Acid phosphatase (phoC) from Zymomonas mobilis subsp. mobilis (strain ATCC 31821 / ZM4 / CP4).